A 3118-amino-acid polypeptide reads, in one-letter code: Laminin subunit alpha-2 (3118 aa).

The N-terminal stretch at 1–19 is a signal peptide; sequence MPAATAGILLLLLLGTLEG. The region spanning 31–282 is the Laminin N-terminal domain; that stretch reads QQRGLFPAVL…SVKDISVGGM (252 aa). N-linked (GlcNAc...) asparagine glycans are attached at residues N51 and N85. Cystine bridges form between C283/C292, C285/C303, C305/C314, C317/C337, C340/C349, and C342/C374. Laminin EGF-like domains are found at residues 283 to 339, 340 to 409, 410 to 464, and 465 to 513; these read CICY…ECEA, CNCH…PCQP, CHCD…DCQP, and CNCS…GCEE. N299 carries an N-linked (GlcNAc...) asparagine glycan. N-linked (GlcNAc...) asparagine glycosylation is found at N359 and N376. 10 cysteine pairs are disulfide-bonded: C377/C386, C389/C407, C410/C422, C412/C438, C440/C449, C452/C462, C465/C478, C467/C482, C484/C493, and C496/C511. An N-linked (GlcNAc...) asparagine glycan is attached at N466. One can recognise a Laminin EGF-like 5; first part domain in the interval 514–523; the sequence is CFCSGVSNRC. The Laminin IV type A 1 domain occupies 527–719; that stretch reads YWTYGNIQDM…DRRIATDVEV (193 aa). The Laminin EGF-like 5; second part domain maps to 720 to 752; it reads CQCPPGYSGSSCETCWPRHRRVNGTIFGGICEP. N-linked (GlcNAc...) asparagine glycosylation occurs at N742. 32 disulfides stabilise this stretch: C753-C762, C755-C769, C772-C781, C784-C800, C803-C818, C805-C828, C831-C840, C843-C858, C861-C875, C863-C882, C885-C894, C897-C911, C914-C926, C916-C933, C935-C944, C947-C960, C963-C975, C965-C981, C983-C992, C995-C1007, C1010-C1019, C1012-C1026, C1028-C1037, C1040-C1053, C1056-C1068, C1058-C1075, C1077-C1086, C1089-C1099, C1102-C1114, C1104-C1130, C1132-C1141, and C1144-C1159. Laminin EGF-like domains lie at 753–802, 803–860, 861–913, 914–962, 963–1009, 1010–1055, 1056–1101, and 1102–1161; these read CQCF…DCQP, CACP…SCQP, CQCN…NCQP, CRCN…GCLP, CNCN…GCIA, CDCS…GCKV, CNCS…LCTL, and CDCF…GCSS. N-linked (GlcNAc...) asparagine glycosylation occurs at N919. N1031 carries N-linked (GlcNAc...) asparagine glycosylation. Residue N1057 is glycosylated (N-linked (GlcNAc...) asparagine). The region spanning 1162 to 1171 is the Laminin EGF-like 14; first part domain; sequence CYCFGVTSQC. The 204-residue stretch at 1172 to 1375 folds into the Laminin IV type A 2 domain; it reads SEAKGLIRTW…GSPPAHLIER (204 aa). Residues 1376–1415 form the Laminin EGF-like 14; second part domain; the sequence is CDCPPGYSGLSCETCAPGFYRLRSEPGGRTPGPTLGTCVP. Cystine bridges form between C1378–C1387, C1416–C1425, C1418–C1432, C1435–C1444, C1447–C1462, C1465–C1480, C1467–C1490, C1493–C1502, C1505–C1520, C1523–C1535, C1525–C1542, C1544–C1553, and C1556–C1567. Laminin EGF-like domains are found at residues 1416 to 1464, 1465 to 1522, and 1523 to 1569; these read CQCN…DCQP, CACP…SCQE, and CECD…ECVF. Residues 1570–2140 form a domain II and I region; it reads CGDECTGLLL…NQARKQANSI (571 aa). Residues N1593, N1610, N1696, N1806, N1897, N1912, N1916, N2013, N2024, N2041, N2122, and N2236 are each glycosylated (N-linked (GlcNAc...) asparagine). The stretch at 1662 to 1863 forms a coiled coil; that stretch reads QDAERTNSRA…DIKTKLPPMS (202 aa). Residues 1923–2146 are a coiled coil; it reads AYSNIKDYID…ANSIKVSVSS (224 aa). Laminin G-like domains follow at residues 2141–2324, 2336–2517, 2522–2706, 2759–2930, and 2929–3115; these read KVSV…CKGC, TIQF…TKGC, VYTV…IGRC, SKQF…VGTC, and TCFA…PVSC. C2298 and C2324 form a disulfide bridge. N2356, N2431, and N2474 each carry an N-linked (GlcNAc...) asparagine glycan. A disulfide bridge connects residues C2491 and C2517. Residues N2547, N2554, and N2644 are each glycosylated (N-linked (GlcNAc...) asparagine). The cysteines at positions 2679 and 2706 are disulfide-linked. N2889 carries N-linked (GlcNAc...) asparagine glycosylation. Intrachain disulfides connect C2905-C2930 and C3083-C3115.

As to quaternary structure, laminin is a complex glycoprotein, consisting of three different polypeptide chains (alpha, beta, gamma), which are bound to each other by disulfide bonds into a cross-shaped molecule comprising one long and three short arms with globules at each end. Alpha-2 is a subunit of laminin-2 (laminin-211 or merosin), laminin-4 (laminin-221 or S-merosin) and laminin-12 (laminin-213). Interacts with FBLN1, FBLN2 and NID2.

It localises to the secreted. It is found in the extracellular space. The protein localises to the extracellular matrix. The protein resides in the basement membrane. Binding to cells via a high affinity receptor, laminin is thought to mediate the attachment, migration and organization of cells into tissues during embryonic development by interacting with other extracellular matrix components. In Mus musculus (Mouse), this protein is Laminin subunit alpha-2 (Lama2).